Reading from the N-terminus, the 166-residue chain is MEASGERAAVVRRLMEVKEESGKTFSEIAAETGLTNVYVAQLLRRQAHLKADTVPALRAALPTLTDELVQLMMQPPFRSYNPDIVQEPAIYRLNEAVMHFGESIKEIINEEFGDGIMSAIDFYCSVDKVQGADGKDRVVVTFDGKYLPYTEQKSEHMMSRPTRKTS.

Residues Arg-92, Glu-95, and Ser-118 contribute to the active site.

The protein belongs to the cyanase family.

The catalysed reaction is cyanate + hydrogencarbonate + 3 H(+) = NH4(+) + 2 CO2. Catalyzes the reaction of cyanate with bicarbonate to produce ammonia and carbon dioxide. This Sorghum bicolor (Sorghum) protein is Cyanate hydratase.